The following is a 455-amino-acid chain: Chromosomal replication initiator protein DnaA (455 aa).

A domain I, interacts with DnaA modulators region spans residues 1 to 75 (MDTNNNIEKE…EILSQNKVGM (75 aa)). Residues 75–106 (MHLAHSVDVRIEVAPKIQISAQPNINYKAVKT) are domain II. Positions 107 to 321 (SVKDSYTFEN…GAIIKISVNA (215 aa)) are domain III, AAA+ region. The ATP site is built by G151, G153, K154, and T155. The segment at 322–455 (NLMNAPIDLN…DKKTAFHSSE (134 aa)) is domain IV, binds dsDNA.

Belongs to the DnaA family. In terms of assembly, oligomerizes as a right-handed, spiral filament on DNA at oriC.

The protein localises to the cytoplasm. In terms of biological role, plays an essential role in the initiation and regulation of chromosomal replication. ATP-DnaA binds to the origin of replication (oriC) to initiate formation of the DNA replication initiation complex once per cell cycle. Binds the DnaA box (a 9 base pair repeat at the origin) and separates the double-stranded (ds)DNA. Forms a right-handed helical filament on oriC DNA; dsDNA binds to the exterior of the filament while single-stranded (ss)DNA is stabiized in the filament's interior. The ATP-DnaA-oriC complex binds and stabilizes one strand of the AT-rich DNA unwinding element (DUE), permitting loading of DNA polymerase. After initiation quickly degrades to an ADP-DnaA complex that is not apt for DNA replication. Binds acidic phospholipids. This chain is Chromosomal replication initiator protein DnaA, found in Helicobacter pylori (strain Shi470).